The chain runs to 238 residues: Aspartate/glutamate leucyltransferase (238 aa).

The protein belongs to the R-transferase family. Bpt subfamily.

It is found in the cytoplasm. It catalyses the reaction N-terminal L-glutamyl-[protein] + L-leucyl-tRNA(Leu) = N-terminal L-leucyl-L-glutamyl-[protein] + tRNA(Leu) + H(+). The enzyme catalyses N-terminal L-aspartyl-[protein] + L-leucyl-tRNA(Leu) = N-terminal L-leucyl-L-aspartyl-[protein] + tRNA(Leu) + H(+). Functionally, functions in the N-end rule pathway of protein degradation where it conjugates Leu from its aminoacyl-tRNA to the N-termini of proteins containing an N-terminal aspartate or glutamate. The sequence is that of Aspartate/glutamate leucyltransferase from Shewanella sp. (strain MR-7).